The following is a 711-amino-acid chain: RB-associated KRAB zinc finger protein (711 aa).

A KRAB domain is found at 8 to 79 (LSFKDVAVAF…EGDRHAQRHL (72 aa)). Glycyl lysine isopeptide (Lys-Gly) (interchain with G-Cter in SUMO2) cross-links involve residues Lys97 and Lys256. The tract at residues 170–257 (AYGESLEDFN…YPRSQMELKP (88 aa)) is required for interaction with RB1. 2 C2H2-type zinc fingers span residues 258–280 (FECT…QRAH) and 286–308 (YACS…RRSH). A Glycyl lysine isopeptide (Lys-Gly) (interchain with G-Cter in SUMO2) cross-link involves residue Lys312. 6 consecutive C2H2-type zinc fingers follow at residues 314 to 336 (YKCN…QRTH), 342 to 364 (YECS…QRNH), 370 to 392 (YPCN…QRTH), 398 to 420 (YKCN…QRTH), 426 to 448 (YQCS…YRSH), and 454 to 476 (YECT…WKVH). Lys354 participates in a covalent cross-link: Glycyl lysine isopeptide (Lys-Gly) (interchain with G-Cter in SUMO2). The interval 414 to 711 (ITHQRTHTGE…TVNVLTVEKL (298 aa)) is interaction with AR. Residues 508 to 530 (YECNECGKTFLDSSAFHRHQSVP) form a C2H2-type 9; degenerate zinc finger. Lys534 is covalently cross-linked (Glycyl lysine isopeptide (Lys-Gly) (interchain with G-Cter in SUMO2)). 6 C2H2-type zinc fingers span residues 536 to 558 (YECN…YRGH), 564 to 586 (FGCS…QRVH), 592 to 614 (YECY…HRIH), 620 to 642 (YECS…YRSH), 648 to 670 (YECN…YRTH), and 676 to 698 (YECN…QRIH).

Belongs to the krueppel C2H2-type zinc-finger protein family. Interacts with AR. May also interact with other nuclear hormone receptors such as NR3C1/GR. Interacts with RB1.

The protein resides in the nucleus. Its function is as follows. May repress E2F-dependent transcription. May promote AR-dependent transcription. This Mus musculus (Mouse) protein is RB-associated KRAB zinc finger protein (Rbak).